A 487-amino-acid chain; its full sequence is Cobyric acid synthase (487 aa).

In terms of domain architecture, GATase cobBQ-type spans 249 to 435 (GIDIAIVRLP…IHGIFDEGDF (187 aa)). Catalysis depends on cysteine 330, which acts as the Nucleophile. Residue histidine 427 is part of the active site.

The protein belongs to the CobB/CobQ family. CobQ subfamily.

It functions in the pathway cofactor biosynthesis; adenosylcobalamin biosynthesis. Its function is as follows. Catalyzes amidations at positions B, D, E, and G on adenosylcobyrinic A,C-diamide. NH(2) groups are provided by glutamine, and one molecule of ATP is hydrogenolyzed for each amidation. This Clostridium perfringens (strain ATCC 13124 / DSM 756 / JCM 1290 / NCIMB 6125 / NCTC 8237 / Type A) protein is Cobyric acid synthase.